The chain runs to 955 residues: Glycine dehydrogenase (decarboxylating) (955 aa).

Position 705 is an N6-(pyridoxal phosphate)lysine (lysine 705).

The protein belongs to the GcvP family. In terms of assembly, the glycine cleavage system is composed of four proteins: P, T, L and H. Pyridoxal 5'-phosphate is required as a cofactor.

The enzyme catalyses N(6)-[(R)-lipoyl]-L-lysyl-[glycine-cleavage complex H protein] + glycine + H(+) = N(6)-[(R)-S(8)-aminomethyldihydrolipoyl]-L-lysyl-[glycine-cleavage complex H protein] + CO2. Its function is as follows. The glycine cleavage system catalyzes the degradation of glycine. The P protein binds the alpha-amino group of glycine through its pyridoxal phosphate cofactor; CO(2) is released and the remaining methylamine moiety is then transferred to the lipoamide cofactor of the H protein. This chain is Glycine dehydrogenase (decarboxylating), found in Aliivibrio fischeri (strain ATCC 700601 / ES114) (Vibrio fischeri).